The primary structure comprises 636 residues: Serine/threonine-protein kinase hal4 (636 aa).

A compositionally biased stretch (basic and acidic residues) spans 1–11 (MGEKDKLHEIS). Disordered regions lie at residues 1–167 (MGEK…AGVV) and 181–261 (AASP…PSSA). Over residues 33–45 (EPPPPSSQQPPST) the composition is skewed to pro residues. Composition is skewed to polar residues over residues 56 to 92 (ALKQNVRPSLNSVQQTPASIDAVASSSNVSLQSQQPL) and 113 to 124 (NPSRHVSSTSNK). Positions 140–155 (PSGSVPPSASVSRANS) are enriched in low complexity. Polar residues predominate over residues 182-226 (ASPNPSTPSNGPAPVSTTATPSRNPVTRLQRIFSQNSVSRQNSRT). S218 is modified (phosphoserine). Residues 234–261 (NTEETNSTGGSETGGAANSSSTSNPSSA) are compositionally biased toward low complexity. A phosphothreonine mark is found at T238 and T241. At S299 the chain carries Phosphoserine. A Protein kinase domain is found at 351 to 623 (GRCQEVIGRG…AKQIMKSEWV (273 aa)). ATP is bound by residues 357–365 (IGRGAFGVV) and K385. D481 functions as the Proton acceptor in the catalytic mechanism.

It belongs to the protein kinase superfamily. Ser/Thr protein kinase family. In terms of assembly, interacts with sty1.

The protein resides in the cytoplasm. The catalysed reaction is L-seryl-[protein] + ATP = O-phospho-L-seryl-[protein] + ADP + H(+). It carries out the reaction L-threonyl-[protein] + ATP = O-phospho-L-threonyl-[protein] + ADP + H(+). In terms of biological role, promotes K(+) uptake, by the potassium transporter trk1-trk2, which leads to the subsequent cellular resistance to toxic cations such as Na(+), Li(+) and Ca(2+). The polypeptide is Serine/threonine-protein kinase hal4 (hal4) (Schizosaccharomyces pombe (strain 972 / ATCC 24843) (Fission yeast)).